A 35-amino-acid chain; its full sequence is Cupiennin-2b (35 aa).

Gln-35 is modified (glutamine amide).

In terms of tissue distribution, expressed by the venom gland.

Its subcellular location is the secreted. This Cupiennius salei (American wandering spider) protein is Cupiennin-2b.